A 527-amino-acid polypeptide reads, in one-letter code: Berberine bridge enzyme-like 14 (527 aa).

The signal sequence occupies residues 1–23; the sequence is MKSSTTQTLIFTVFLLLIPTSFA. Cys-35 and Cys-96 form a disulfide bridge. N-linked (GlcNAc...) asparagine glycans are attached at residues Asn-47, Asn-72, Asn-161, Asn-296, Asn-328, Asn-396, and Asn-481. The region spanning 74–249 is the FAD-binding PCMH-type domain; sequence TTRKPVAIVA…LAWKIKLVPV (176 aa). Residues 111–174 constitute a cross-link (6-(S-cysteinyl)-8alpha-(pros-histidyl)-FAD (His-Cys)); it reads HDYDGMSYLS…NLRGFPAGIC (64 aa).

The protein belongs to the oxygen-dependent FAD-linked oxidoreductase family. The cofactor is FAD. Post-translationally, the FAD cofactor is bound via a bicovalent 6-S-cysteinyl, 8alpha-N1-histidyl FAD linkage.

It localises to the secreted. The protein resides in the cell wall. This is Berberine bridge enzyme-like 14 from Arabidopsis thaliana (Mouse-ear cress).